The primary structure comprises 1251 residues: Phospholipid-transporting ATPase IC (1251 aa).

The segment at 1-52 (MSTERDSETTFDEESQPNDEVVPYSDDETEDELEDQGSTVEPEQNRVNREAE) is disordered. The Cytoplasmic segment spans residues 1–121 (MSTERDSETT…LFEQFKRAAN (121 aa)). A compositionally biased stretch (acidic residues) spans 25 to 35 (SDDETEDELED). Basic and acidic residues predominate over residues 43-52 (EQNRVNREAE). The chain crosses the membrane as a helical span at residues 122–142 (FYFLILLILQAIPQISTLAWY). At 143 to 144 (TT) the chain is on the exoplasmic loop side. Residues 145–165 (LVPLLLVLGITAIKDLVDDVA) traverse the membrane as a helical segment. Over 166-339 (RHKMDKEINN…RTKIDYLMNY (174 aa)) the chain is Cytoplasmic. Residues 340 to 360 (MVYTIFIVLILVSAGLAIGHA) traverse the membrane as a helical segment. The Exoplasmic loop segment spans residues 361-385 (YWEAQVGNYSWYLYDGENATPSYRG). Residues 386–406 (FLNFWGYIIVLNTMVPISLYV) traverse the membrane as a helical segment. Residues 407–952 (SVEVIRLGQS…SYIRMCKFLR (546 aa)) lie on the Cytoplasmic side of the membrane. The active-site 4-aspartylphosphate intermediate is the Asp-454. ATP is bound by residues Asp-454, Lys-455, Thr-456, Glu-555, Phe-596, Lys-619, Arg-652, Thr-732, Gly-733, Asp-734, Arg-867, and Lys-873. A Mg(2+)-binding site is contributed by Asp-454. A Mg(2+)-binding site is contributed by Thr-456. A Mg(2+)-binding site is contributed by Asp-893. Residues Asn-896 and Asp-897 each coordinate ATP. Asp-897 is a binding site for Mg(2+). A helical transmembrane segment spans residues 953 to 973 (YFFYKNFAFTLVHFWYSFFNG). Residues 974-982 (YSAQTAYED) are Exoplasmic loop-facing. The helical transmembrane segment at 983-1003 (WFITLYNVLYSSLPVLLMGLL) threads the bilayer. The Cytoplasmic segment spans residues 1004 to 1032 (DQDVSDKLSLRFPGLYVVGQRDLLFNYKR). Residues 1033–1053 (FFVSLLHGVLTSMVLFFIPLG) traverse the membrane as a helical segment. Residues 1054-1071 (AYLQTVGQDGEAPSDYQS) are Exoplasmic loop-facing. The chain crosses the membrane as a helical span at residues 1072-1092 (FAVTVASALVITVNFQIGLDT). Residues 1093-1094 (SY) are Cytoplasmic-facing. A helical membrane pass occupies residues 1095–1115 (WTFVNAFSIFGSIALYFGIMF). Residues 1116-1142 (DFHSAGIHVLFPSAFQFTGTASNALRQ) lie on the Exoplasmic loop side of the membrane. Residues 1143–1163 (PYIWLTIILTVAVCLLPVVAI) traverse the membrane as a helical segment. Over 1164 to 1251 (RFLSMTIWPS…TAEYRRTVES (88 aa)) the chain is Cytoplasmic. Phosphoserine is present on Ser-1223.

It belongs to the cation transport ATPase (P-type) (TC 3.A.3) family. Type IV subfamily. As to quaternary structure, component of a P4-ATPase flippase complex which consists of a catalytic alpha subunit ATP8B1 and an accessory beta subunit TMEM30A. The flippase ATP8B1:TMEM30A complex can form an intermediate phosphoenzyme in vitro. Also interacts with beta subunit TMEM30B. Mg(2+) serves as cofactor. In terms of tissue distribution, hepatocytes, bile duct, intestinal epithelial cells (cholangiocytes and ileocytes), and pancreatic acinar cells.

The protein localises to the cell membrane. It localises to the apical cell membrane. The protein resides in the cell projection. Its subcellular location is the stereocilium. It is found in the endoplasmic reticulum. The protein localises to the golgi apparatus. The catalysed reaction is ATP + H2O + phospholipidSide 1 = ADP + phosphate + phospholipidSide 2.. It carries out the reaction a 1,2-diacyl-sn-glycero-3-phosphocholine(out) + ATP + H2O = a 1,2-diacyl-sn-glycero-3-phosphocholine(in) + ADP + phosphate + H(+). It catalyses the reaction a 1,2-diacyl-sn-glycero-3-phospho-L-serine(out) + ATP + H2O = a 1,2-diacyl-sn-glycero-3-phospho-L-serine(in) + ADP + phosphate + H(+). Catalytic component of a P4-ATPase flippase complex which catalyzes the hydrolysis of ATP coupled to the transport of phospholipids, in particular phosphatidylcholines (PC), from the outer to the inner leaflet of the plasma membrane. May participate in the establishment of the canalicular membrane integrity by ensuring asymmetric distribution of phospholipids in the canicular membrane. Thus may have a role in the regulation of bile acids transport into the canaliculus, uptake of bile acids from intestinal contents into intestinal mucosa or both and protect hepatocytes from bile salts. Involved in the microvillus formation in polarized epithelial cells; the function seems to be independent from its flippase activity. Participates in correct apical membrane localization of CDC42, CFTR and SLC10A2. Enables CDC42 clustering at the apical membrane during enterocyte polarization through the interaction between CDC42 polybasic region and negatively charged membrane lipids provided by ATP8B1. Together with TMEM30A is involved in uptake of the synthetic drug alkylphospholipid perifosine. Required for the preservation of cochlear hair cells in the inner ear. According PubMed:20852622 is proposed to act as cardiolipin transporter during inflammatory injury; the function is questioned by PubMed:21475228. In Mus musculus (Mouse), this protein is Phospholipid-transporting ATPase IC.